We begin with the raw amino-acid sequence, 1012 residues long: Structural polyprotein (1012 aa).

Position 30 (Asp30) interacts with a divalent metal cation. A Peptidase S50 domain is found at 513 to 755 (ADKGYEVVAN…AGRQYHLAMA (243 aa)). Residue Ser652 is the Nucleophile of the active site. Lys692 is a catalytic residue. The segment at 970-1012 (MEMKHRNPRRALPKPKPKPNAPTQRPPGRLGRWIRTVSDEDLE) is disordered. A compositionally biased stretch (basic residues) spans 975–986 (RNPRRALPKPKP). Positions 1003 to 1012 (IRTVSDEDLE) are interaction with VP1 protein.

As to quaternary structure, homotrimer. A central divalent metal stabilizes the VP2 trimer. Interacts with host ITGA4/ITGB1. In terms of assembly, homodimer. Interacts (via C-terminus) with VP1 in the cytoplasm. Interacts with VP2. Specific enzymatic cleavages yield mature proteins. The capsid assembly seems to be regulated by polyprotein processing. The protease VP4 cleaves itself off the polyprotein, thus releasing pre-VP2 and VP3 within the infected cell. During capsid assembly, the C-terminus of pre-VP2 is further processed by VP4, giving rise to VP2, the external capsid protein and three small peptides that all stay closely associated with the capsid.

The protein localises to the virion. It localises to the host cytoplasm. Capsid protein VP2 self assembles to form an icosahedral capsid with a T=13 symmetry, about 70 nm in diameter, and consisting of 260 VP2 trimers. The capsid encapsulates the genomic dsRNA. VP2 is also involved in attachment and entry into the host cell by interacting with host ITGA4/ITGB1. In terms of biological role, the precursor of VP2 plays an important role in capsid assembly. First, pre-VP2 and VP2 oligomers assemble to form a procapsid. Then, the pre-VP2 intermediates may be processed into VP2 proteins by proteolytic cleavage mediated by VP4 to obtain the mature virion. The final capsid is composed of pentamers and hexamers but VP2 has a natural tendency to assemble into all-pentameric structures. Therefore pre-VP2 may be required to allow formation of the hexameric structures. Functionally, protease VP4 is a serine protease that cleaves the polyprotein into its final products. Pre-VP2 is first partially cleaved, and may be completely processed by VP4 upon capsid maturation. Its function is as follows. Capsid protein VP3 plays a key role in virion assembly by providing a scaffold for the capsid made of VP2. May self-assemble to form a T=4-like icosahedral inner-capsid composed of at least 180 trimers. Plays a role in genomic RNA packaging by recruiting VP1 into the capsid and interacting with the dsRNA genome segments to form a ribonucleoprotein complex. Additionally, the interaction of the VP3 C-terminal tail with VP1 removes the inherent structural blockade of the polymerase active site. Thus, VP3 can also function as a transcriptional activator. Structural peptide 1 is a small peptide derived from pre-VP2 C-terminus. It destabilizes and perforates cell membranes, suggesting a role during entry. In terms of biological role, structural peptide 2 is a small peptide derived from pVP2 C-terminus. It is not essential for the virus viability, but viral growth is affected when missing. Functionally, structural peptide 3 is a small peptide derived from pVP2 C-terminus. It is not essential for the virus viability, but viral growth is affected when missing. Its function is as follows. Structural peptide 4 is a small peptide derived from pVP2 C-terminus. It is essential for the virus viability. In Avian infectious bursal disease virus (strain Chicken/Cuba/Soroa/1998) (IBDV), this protein is Structural polyprotein.